A 707-amino-acid polypeptide reads, in one-letter code: Serine/threonine protein kinase UL97 (707 aa).

A compositionally biased stretch (low complexity) spans 1 to 14 (MSSALRSRARSASL). Disordered regions lie at residues 1–33 (MSSA…SRAR), 113–146 (DGEK…GDGY), 176–198 (FTGG…RPLR), and 231–264 (ESQD…EADS). The span at 113–127 (DGEKEDAASDKENLR) shows a compositional bias: basic and acidic residues. Positions 178 to 188 (GGSDPSDSVSG) are enriched in low complexity. Residues 337–345 (LGQGSFGEV) and Lys359 each bind ATP. The Proton acceptor role is filled by Asp456.

It belongs to the protein kinase superfamily. Tyr protein kinase family. HCMV ganciclovir subfamily. Interacts with UL83. Post-translationally, autophosphorylates on serine and threonine residues.

The protein resides in the virion. The catalysed reaction is L-seryl-[protein] + ATP = O-phospho-L-seryl-[protein] + ADP + H(+). It carries out the reaction L-threonyl-[protein] + ATP = O-phospho-L-threonyl-[protein] + ADP + H(+). In terms of biological role, serine/threonine protein kinase that plays important roles in several processes including nuclear viral egress, viral replication or regulation of host cell cycle progression. Participates in the acquisition of tegument during virion morphogenesis in the nucleus. Phosphorylates the viral nuclear egress complex (NEC) subunits UL50 and UL53. Redistributes the host nuclear lamina by phosphorylating cellular Lamins-A/C. Plays a role in viral DNA synthesis by phosphorylating the DNA polymerase processivity factor UL44. Stimulates host cell cycle to support viral DNA synthesis by phosphorylating host retinoblastoma/RB1 protein. Additional substrates have been identified including host EF1D or H2B. Also phosphorylates host SAMHD1 and thereby counteracts its antiviral effect by reducing its dNTP hydrolase activity. This Human cytomegalovirus (strain AD169) (HHV-5) protein is Serine/threonine protein kinase UL97 (UL97).